Here is a 75-residue protein sequence, read N- to C-terminus: uncharacterized protein (75 aa).

This is an uncharacterized protein from Enterobacteria phage T4 (Bacteriophage T4).